A 149-amino-acid polypeptide reads, in one-letter code: Oligosaccharyltransferase complex subunit OSTC (149 aa).

Over 1 to 32 the chain is Cytoplasmic; sequence METLYRVPFLVLECPNLKLKKPPWLHMPSAMT. Residues 33-53 traverse the membrane as a helical segment; the sequence is VYALVVVSYFLITGGIIYDVI. Over 54-83 the chain is Extracellular; it reads VEPPSVGSMTDEHGHQRPVAFLAYRVNGQY. Residues 84–104 traverse the membrane as a helical segment; the sequence is IMEGLASSFLFTMGGLGFIIL. Topologically, residues 105-117 are cytoplasmic; that stretch reads DRSNAPNIPKLNR. Residues 118 to 138 traverse the membrane as a helical segment; it reads FLLLFIGFVCVLLSFFMARVF. The Extracellular segment spans residues 139-149; the sequence is MRMKLPGYLMG.

The protein belongs to the OSTC family. As to quaternary structure, component of STT3A-containing oligosaccharyl transferase (OST-A) complex. STT3A-containing complex assembly occurs through the formation of 3 subcomplexes. Subcomplex 1 contains RPN1 and TMEM258, subcomplex 2 contains the STT3A-specific subunits STT3A, DC2/OSTC, and KCP2 as well as the core subunit OST4, and subcomplex 3 contains RPN2, DAD1, and OST48. The OST-A complex can form stable complexes with the Sec61 complex or with both the Sec61 and TRAP complexes. Interacts with PSEN1 and NCSTN; indicative for an association with the gamma-secretase complex.

It localises to the endoplasmic reticulum. It is found in the membrane. It functions in the pathway protein modification; protein glycosylation. Subunit of STT3A-containing oligosaccharyl transferase (OST-A) complex that catalyzes the initial transfer of a defined glycan (Glc(3)Man(9)GlcNAc(2) in eukaryotes) from the lipid carrier dolichol-pyrophosphate to an asparagine residue within an Asn-X-Ser/Thr consensus motif in nascent polypeptide chains, the first step in protein N-glycosylation. N-glycosylation occurs cotranslationally and the complex associates with the Sec61 complex at the channel-forming translocon complex that mediates protein translocation across the endoplasmic reticulum (ER). Within the OST-A complex, acts as an adapter that anchors the OST-A complex to the Sec61 complex. May be involved in N-glycosylation of APP (amyloid-beta precursor protein). Can modulate gamma-secretase cleavage of APP by enhancing endoprotelysis of PSEN1. The protein is Oligosaccharyltransferase complex subunit OSTC of Homo sapiens (Human).